The chain runs to 391 residues: Putative 1-acyl-sn-glycerol-3-phosphate acyltransferase acl-12 (391 aa).

A run of 2 helical transmembrane segments spans residues 47–67 (FFFM…SLLF) and 84–104 (LCAM…ATVT). The HXXXXD motif signature appears at 124 to 129 (HLGLLD).

Belongs to the 1-acyl-sn-glycerol-3-phosphate acyltransferase family.

Its subcellular location is the membrane. The catalysed reaction is a 1-acyl-sn-glycero-3-phosphate + an acyl-CoA = a 1,2-diacyl-sn-glycero-3-phosphate + CoA. It functions in the pathway phospholipid metabolism; CDP-diacylglycerol biosynthesis; CDP-diacylglycerol from sn-glycerol 3-phosphate: step 2/3. Converts lysophosphatidic acid (LPA) into phosphatidic acid by incorporating an acyl moiety at the sn-2 position of the glycerol backbone. The sequence is that of Putative 1-acyl-sn-glycerol-3-phosphate acyltransferase acl-12 (acl-12) from Caenorhabditis elegans.